The following is a 236-amino-acid chain: Small ribosomal subunit protein uS2c (236 aa).

Belongs to the universal ribosomal protein uS2 family.

Its subcellular location is the plastid. The protein resides in the chloroplast. This is Small ribosomal subunit protein uS2c (rps2) from Liriodendron tulipifera (Tuliptree).